We begin with the raw amino-acid sequence, 391 residues long: Argininosuccinate synthase (391 aa).

6–14 (AYSGGLDTT) is an ATP binding site. Tyr84 lines the L-citrulline pocket. Gly114 is a binding site for ATP. 3 residues coordinate L-aspartate: Thr116, Asn120, and Asp121. Asn120 lines the L-citrulline pocket. Residues Arg124, Ser171, Ser180, Glu253, and Tyr265 each contribute to the L-citrulline site.

Belongs to the argininosuccinate synthase family. Type 1 subfamily. As to quaternary structure, homotetramer.

Its subcellular location is the cytoplasm. The enzyme catalyses L-citrulline + L-aspartate + ATP = 2-(N(omega)-L-arginino)succinate + AMP + diphosphate + H(+). The protein operates within amino-acid biosynthesis; L-arginine biosynthesis; L-arginine from L-ornithine and carbamoyl phosphate: step 2/3. The protein is Argininosuccinate synthase of Saccharolobus solfataricus (strain ATCC 35092 / DSM 1617 / JCM 11322 / P2) (Sulfolobus solfataricus).